Consider the following 397-residue polypeptide: 42.8 kDa protein in whiE locus (397 aa).

The disordered stretch occupies residues M1–T22. The span at A8 to T22 shows a compositional bias: low complexity. An ABM domain is found at V46–L137.

This sequence belongs to the SchA/CurD family.

This is 42.8 kDa protein in whiE locus from Streptomyces coelicolor (strain ATCC BAA-471 / A3(2) / M145).